A 533-amino-acid polypeptide reads, in one-letter code: Calcium/calmodulin-dependent protein kinase type II (533 aa).

Residues 18-26 (LGKGAFSVV) and lysine 41 contribute to the ATP site. Aspartate 134 functions as the Proton acceptor in the catalytic mechanism. Threonine 284 is modified (phosphothreonine; by autocatalysis). Composition is skewed to polar residues over residues 316 to 345 (TSDS…QPTS) and 377 to 391 (PPST…SQTI). Disordered stretches follow at residues 316-347 (TSDS…TSPA) and 369-400 (LLNK…EKAQ).

This sequence belongs to the protein kinase superfamily. CAMK Ser/Thr protein kinase family. CaMK subfamily. As to quaternary structure, dodecamer. Subunits are tightly packed around a central ring-shaped scaffold with extensive contacts between the regulatory segment of one kinase and the catalytic domain of another enabling cooperative activation of a subunit by the adjacent molecule. Interacts with and phosphorylates daf-16; the interaction promotes daf-16 nuclear localization. Interacts with egl-2 and tir-1. Interacts with nsy-1. Mg(2+) is required as a cofactor.

Its subcellular location is the cytoplasm. It localises to the cell projection. The protein localises to the axon. The protein resides in the perikaryon. It carries out the reaction L-seryl-[protein] + ATP = O-phospho-L-seryl-[protein] + ADP + H(+). It catalyses the reaction L-threonyl-[protein] + ATP = O-phospho-L-threonyl-[protein] + ADP + H(+). With respect to regulation, ca(2+)/calmodulin binding removes an autoinhibitory regulatory segment located C-terminal to the kinase domain. This releases the catalytic activity of the enzyme and makes accessible a regulatory residue Thr-284. Phosphorylation of Thr-284 by another kinase domain within the oligomeric holoenzyme keeps CaMKII active in the absence of Ca(2+)/calmodulin by preventing the rebinding of the regulatory segment to the kinase domain and by increasing the affinity of calmodulin for the enzyme. Can respond to high-frequency Ca(2+) pulses to become Ca(2+) independent. Functionally, role in locomotion and neuronal cell fate specification. Required for the regulation of synaptic density, egg laying, defecation, and meiotic maturation. Required for viability under chronic osmotic stress in which it acts downstream of osr-1. Regulates the synaptic trafficking of glr-1. Bidirectional modulator of neurotransmitter release with negative modulatory effects mainly mediated via slo-1 activation. May suppress the functional response to an internal pacemaker, perhaps by modulating the activity of the IP3 receptor. The chain is Calcium/calmodulin-dependent protein kinase type II from Caenorhabditis briggsae.